The primary structure comprises 472 residues: Riboflavin transporter RibJ (472 aa).

Residues 1–11 (MLPCFTRKPVD) lie on the Cytoplasmic side of the membrane. The chain crosses the membrane as a helical span at residues 12–32 (HPLGFLVALSGLLMQLMSYGI). At 33-58 (DNSYSIFSDDMHKDPSLGYPSVTTIS) the chain is on the extracellular side. Residues 59–79 (LGNSVSLGLSPAFGVLCGFLV) traverse the membrane as a helical segment. The Cytoplasmic portion of the chain corresponds to 80 to 85 (DRVPPR). Residues 86–106 (LMMAVSTLMLFAGLWLSSTFA) traverse the membrane as a helical segment. Residues 107–108 (HN) lie on the Extracellular side of the membrane. Asn-108 carries N-linked (GlcNAc...) asparagine glycosylation. Residues 109–129 (VTAVTFSYCLLASISSACMLS) traverse the membrane as a helical segment. The Cytoplasmic segment spans residues 130 to 144 (PGAAATSSWFNRYQG). The helical transmembrane segment at 145–165 (LAMGINFSGGGVGSAIIPSLA) threads the bilayer. The Extracellular portion of the chain corresponds to 166-179 (GKWVVAYGWRKTFR). Residues 180–196 (LMSAFCAIGVVATLLSA) form a helical membrane-spanning segment. Topologically, residues 197–271 (RRAPPKKEEA…TMFSRAFLGN (75 aa)) are cytoplasmic. The interval 200–248 (PPKKEEAGPSEYDEGQERQEQGEEEQAHTDEENRNNNNSNGETTPARRG) is disordered. Over residues 214 to 233 (GQERQEQGEEEQAHTDEENR) the composition is skewed to basic and acidic residues. The helical transmembrane segment at 272-292 (FFCWLIFSWAFYSLIYVAVPY) threads the bilayer. Residues 293–315 (VSSMGKAGTVYADISPIPTDIAS) are Extracellular-facing. The chain crosses the membrane as a helical span at residues 316-336 (TLFTFYGVFQIVGSILVGWLA). The Cytoplasmic portion of the chain corresponds to 337–341 (TGTTN). Residues 342–362 (EFAYVLCATIGGIFCAFLGFC) traverse the membrane as a helical segment. At 363–365 (RSY) the chain is on the extracellular side. The chain crosses the membrane as a helical span at residues 366 to 386 (VAFALLLCVIGFCMAGMFAVM). Topologically, residues 387–399 (PALIAERLYGPNL) are cytoplasmic. The helical transmembrane segment at 400 to 420 (GFYMGAVFLAGVVGGFSAPPI) threads the bilayer. Residues 421-434 (QAELQQRHYGNYTY) lie on the Extracellular side of the membrane. N-linked (GlcNAc...) asparagine glycosylation occurs at Asn-431. The helical transmembrane segment at 435 to 455 (VCVFMSACMTLAAAVCYITMW) threads the bilayer. The Cytoplasmic segment spans residues 456–472 (RDKRVRIVSAAAEAKLA).

This sequence belongs to the major facilitator superfamily. RibJ family.

Its subcellular location is the cell membrane. Transporter involved in riboflavin (vitamin B2) uptake. Also transports FMN and FAD. This is Riboflavin transporter RibJ from Trypanosoma cruzi (strain CL Brener).